The primary structure comprises 199 residues: Ribonuclease P protein component 3 (199 aa).

The protein belongs to the eukaryotic/archaeal RNase P protein component 3 family. As to quaternary structure, consists of a catalytic RNA component and at least 4-5 protein subunits.

It localises to the cytoplasm. The enzyme catalyses Endonucleolytic cleavage of RNA, removing 5'-extranucleotides from tRNA precursor.. Part of ribonuclease P, a protein complex that generates mature tRNA molecules by cleaving their 5'-ends. This Archaeoglobus fulgidus (strain ATCC 49558 / DSM 4304 / JCM 9628 / NBRC 100126 / VC-16) protein is Ribonuclease P protein component 3.